The following is a 1178-amino-acid chain: DNA-directed RNA polymerase subunit beta' (1178 aa).

Zn(2+) contacts are provided by Cys60, Cys62, Cys75, and Cys78. Residues Asp450, Asp452, and Asp454 each coordinate Mg(2+). Residues Cys795, Cys869, Cys876, and Cys879 each contribute to the Zn(2+) site.

It belongs to the RNA polymerase beta' chain family. In terms of assembly, the RNAP catalytic core consists of 2 alpha, 1 beta, 1 beta' and 1 omega subunit. When a sigma factor is associated with the core the holoenzyme is formed, which can initiate transcription. The cofactor is Mg(2+). It depends on Zn(2+) as a cofactor.

It catalyses the reaction RNA(n) + a ribonucleoside 5'-triphosphate = RNA(n+1) + diphosphate. Its function is as follows. DNA-dependent RNA polymerase catalyzes the transcription of DNA into RNA using the four ribonucleoside triphosphates as substrates. The polypeptide is DNA-directed RNA polymerase subunit beta' (Clostridium perfringens (strain ATCC 13124 / DSM 756 / JCM 1290 / NCIMB 6125 / NCTC 8237 / Type A)).